The chain runs to 101 residues: Small ribosomal subunit protein uS14 (101 aa).

It belongs to the universal ribosomal protein uS14 family. In terms of assembly, part of the 30S ribosomal subunit. Contacts proteins S3 and S10.

Its function is as follows. Binds 16S rRNA, required for the assembly of 30S particles and may also be responsible for determining the conformation of the 16S rRNA at the A site. The chain is Small ribosomal subunit protein uS14 from Francisella tularensis subsp. holarctica (strain FTNF002-00 / FTA).